The primary structure comprises 351 residues: uncharacterized protein (351 aa).

Belongs to the bacterial luciferase oxidoreductase family.

This is an uncharacterized protein from Sinorhizobium fredii (strain NBRC 101917 / NGR234).